We begin with the raw amino-acid sequence, 55 residues long: Large ribosomal subunit protein bL33 (55 aa).

The protein belongs to the bacterial ribosomal protein bL33 family.

This is Large ribosomal subunit protein bL33 from Vibrio atlanticus (strain LGP32) (Vibrio splendidus (strain Mel32)).